Consider the following 366-residue polypeptide: 3-beta-hydroxysteroid dehydrogenase (366 aa).

Tyr154 serves as the catalytic Proton donor.

It belongs to the 3-beta-HSD family.

It catalyses the reaction testosterone + NAD(+) = androst-4-ene-3,17-dione + NADH + H(+). The enzyme catalyses testosterone + NADP(+) = androst-4-ene-3,17-dione + NADPH + H(+). Catalyzes the degradation of testosterone into androstenedione. The polypeptide is 3-beta-hydroxysteroid dehydrogenase (Mycolicibacterium neoaurum (Mycobacterium neoaurum)).